The primary structure comprises 1156 residues: Chromosome partition protein Smc (1156 aa).

37-44 contacts ATP; the sequence is PNGAGKSN. The stretch at 167–499 forms a coiled coil; it reads SGIGEYERKK…AIEREVRSFS (333 aa). The 116-residue stretch at 509 to 624 folds into the SMC hinge domain; sequence KGVYGSVSEL…VENFESAKAI (116 aa). The stretch at 654–1001 forms a coiled coil; it reads GELNKRYYEE…EETENKKRKV (348 aa).

Belongs to the SMC family. As to quaternary structure, homodimer.

It localises to the cytoplasm. Required for chromosome condensation and partitioning. The polypeptide is Chromosome partition protein Smc (Aquifex aeolicus (strain VF5)).